A 303-amino-acid chain; its full sequence is uncharacterized protein (303 aa).

This is an uncharacterized protein from Rickettsia prowazekii (strain Madrid E).